The sequence spans 332 residues: BRISC and BRCA1-A complex member 1 (332 aa).

Met1 bears the N-acetylmethionine mark. Residues 1–88 (MEVAEPSCPT…PPPAPEVQVR (88 aa)) are disordered. Acidic residues predominate over residues 10–23 (TEEEEEEEEEEEQS). A phosphoserine mark is found at Ser32, Ser52, and Ser60. Residues 70–83 (GAGPKPWQVPPPAP) are compositionally biased toward pro residues. The VWFA-like stretch occupies residues 98-301 (VIICLDLSEE…LELHNCMAKL (204 aa)).

It belongs to the BABAM1 family. As to quaternary structure, component of the ARISC complex, at least composed of UIMC1/RAP80, ABRAXAS1, BRCC3/BRCC36, BABAM2 and BABAM1/NBA1. Component of the BRCA1-A complex, at least composed of BRCA1, BARD1, UIMC1/RAP80, ABRAXAS1, BRCC3/BRCC36, BABAM2 and BABAM1/NBA1. In the BRCA1-A complex, interacts directly with ABRAXAS1 and BABAM2. Component of the BRISC complex, at least composed of ABRAXAS2, BRCC3/BRCC36, BABAM2 and BABAM1/NBA1. Identified in a complex with SHMT2 and the other subunits of the BRISC complex.

The protein resides in the cytoplasm. It is found in the nucleus. In terms of biological role, component of the BRCA1-A complex, a complex that specifically recognizes 'Lys-63'-linked ubiquitinated histones H2A and H2AX at DNA lesions sites, leading to target the BRCA1-BARD1 heterodimer to sites of DNA damage at double-strand breaks (DSBs). The BRCA1-A complex also possesses deubiquitinase activity that specifically removes 'Lys-63'-linked ubiquitin on histones H2A and H2AX. In the BRCA1-A complex, it is required for the complex integrity and its localization at DSBs. Component of the BRISC complex, a multiprotein complex that specifically cleaves 'Lys-63'-linked ubiquitin in various substrates. In these 2 complexes, it is probably required to maintain the stability of BABAM2 and help the 'Lys-63'-linked deubiquitinase activity mediated by BRCC3/BRCC36 component. The BRISC complex is required for normal mitotic spindle assembly and microtubule attachment to kinetochores via its role in deubiquitinating NUMA1. Plays a role in interferon signaling via its role in the deubiquitination of the interferon receptor IFNAR1; deubiquitination increases IFNAR1 activity by enhancing its stability and cell surface expression. Down-regulates the response to bacterial lipopolysaccharide (LPS) via its role in IFNAR1 deubiquitination. In Bos taurus (Bovine), this protein is BRISC and BRCA1-A complex member 1 (BABAM1).